We begin with the raw amino-acid sequence, 842 residues long: Protein translocase subunit SecA (842 aa).

ATP-binding positions include glutamine 85, 103–107 (GEGKT), and aspartate 493. 4 residues coordinate Zn(2+): cysteine 825, cysteine 827, cysteine 836, and histidine 837.

It belongs to the SecA family. Monomer and homodimer. Part of the essential Sec protein translocation apparatus which comprises SecA, SecYEG and auxiliary proteins SecDF. Other proteins may also be involved. Zn(2+) serves as cofactor.

The protein localises to the cell membrane. Its subcellular location is the cytoplasm. It catalyses the reaction ATP + H2O + cellular proteinSide 1 = ADP + phosphate + cellular proteinSide 2.. Its function is as follows. Part of the Sec protein translocase complex. Interacts with the SecYEG preprotein conducting channel. Has a central role in coupling the hydrolysis of ATP to the transfer of proteins into and across the cell membrane, serving as an ATP-driven molecular motor driving the stepwise translocation of polypeptide chains across the membrane. This chain is Protein translocase subunit SecA, found in Streptococcus equi subsp. zooepidemicus (strain H70).